The sequence spans 371 residues: 43 kDa relaxation protein (371 aa).

Disordered regions lie at residues 1–46 (MASY…GNMP), 150–172 (KEPD…AKNT), 196–221 (RVDS…GQVQ), 263–291 (SERD…FDFE), and 328–371 (IHQE…SFSR). Positions 22–42 (YIAREGKYAREKDSDLEHKES) are enriched in basic and acidic residues. The span at 157–168 (QKRHVSGKHRPN) shows a compositional bias: basic residues. Residues 196–215 (RVDSRSLKAQGIDREPERHL) are compositionally biased toward basic and acidic residues. The segment covering 330–365 (QEMERQRERERLAEKQRQQEKERQRLAEQIRQKPDK) has biased composition (basic and acidic residues).

It belongs to the MobA/MobL family.

Its function is as follows. This protein is probably required for relaxation complex formation. The chain is 43 kDa relaxation protein from Salmonella typhimurium.